The primary structure comprises 125 residues: Aldolase FrzH (125 aa).

It carries out the reaction (2S)-3-(4-methoxyphenyl)-2-[(3S)-3-(methylamino)-8-oxo-1-azaspiro[4.5]decan-1-yl]propanal = (1S,3S,6S,7S,8R)-7-hydroxy-6-[(4-methoxyphenyl)methyl]-3-(methylamino)-5-azatricyclo[6.3.1.0(1,5)]dodecan-9-one. The protein operates within secondary metabolite biosynthesis. Its function is as follows. Aldolase; part of the gene cluster that mediates the biosynthesis of the alkaloid (-)-FR901483, a potent immunosuppressant that shows efficacy in animal models and a probable inhibitor of purine nucleotide biosynthesis by targeting phosphoribosylpyrophosphate amidotransferase (PPAT). Within the pathway, FrzH is a new kind of aldolase with no similarities to known aldolases, and which catalyzes the intramolecular aldol condensation via formation of a C9-C3' bond to yield an aza-tricyclic product. The biosynthesis of (-)-FR901483 starts with the condensation of two L-tyrosines to yield (S,S)-dityrosyl-piperazine. This process occurs in 3 steps with the non-canonical nonribosomal peptide synthetase FrzA catalyzing the reduction of L-tyrosine into L-tyrosinal, the spontaneous condensation of 2 L-tyrosinal units, and the subsequent reduction by the NmrA-like family domain-containing oxidoreductase FrzB. The cytochrome P450 monooxygenase FrzC then performs coupling between N10 and C1' to morph the piperazine into a 1,4-diazabicyclo[3.2.1]octane spiro-fused to a 2,5-cyclohexadienone. The dienone portion is further reduced to cyclohexanone by the flavin-dependent reductase FrzD. The methyltranserases (MTs) FrzE and FrzF are then involved in the methylation at the C10' amine and the C4 phenolic oxygen, respectively. The order of the two MTs appear to be interchangeable. Cleavage of the C9-N10' bond by the dioxygenase FrzG then leads to formation of a conjugated iminium. In addition to the oxidation of C9, an additional dehydrogenation between C7 and C8 can occur to give a likely shunt product. The next biosynthetic step is the intramolecular aldol condensation catalyzed by the newly identified aldolase FrzH to yield an aza-tricyclic product with the formation of a C9-C3' bond. The short-chain dehydrogenase/reductase FrzI then produces dephospho-(-)-FR901483 that is phosphorylated at C4'-OH into (-)-FR901483 by the phosphotransferase FrzJ. This is Aldolase FrzH from Cladobotryum sp.